A 433-amino-acid polypeptide reads, in one-letter code: E3 ubiquitin-protein ligase RGLG5 (433 aa).

The tract at residues 1 to 61 (MGGSSSKESP…SYNSGRQTPK (61 aa)) is disordered. A lipid anchor (N-myristoyl glycine) is attached at Gly2. Residues 22–39 (SVSGSSSYSSAWDQSSYY) are compositionally biased toward low complexity. A compositionally biased stretch (polar residues) spans 40–61 (QTPNHPSASPVSSYNSGRQTPK). The VWFA domain maps to 93–313 (NLIVGIDVTK…KEAEFALSAL (221 aa)). The disordered stretch occupies residues 340–383 (IALPPPTYATQSMRNSPRTSRSTSFQNKPYDNGVSSTPPSTTHN). Over residues 347–383 (YATQSMRNSPRTSRSTSFQNKPYDNGVSSTPPSTTHN) the composition is skewed to polar residues. The RING-type zinc-finger motif lies at 390-423 (CPVCLVSAKNMAFNCGHQTCAGCGEDLHVCPICR).

In terms of assembly, interacts with PP2CA. In terms of processing, N-myristoylated.

The protein localises to the cell membrane. It carries out the reaction S-ubiquitinyl-[E2 ubiquitin-conjugating enzyme]-L-cysteine + [acceptor protein]-L-lysine = [E2 ubiquitin-conjugating enzyme]-L-cysteine + N(6)-ubiquitinyl-[acceptor protein]-L-lysine.. In terms of biological role, together with RGLG1, mediates the ubiquitination and subsequent proteasomal degradation of the target protein PP2CA. Functions as a positive regulator of abscisic acid (ABA) signaling through ABA-dependent degradation of PP2CA, a major inhibitor of ABA signaling. In Arabidopsis thaliana (Mouse-ear cress), this protein is E3 ubiquitin-protein ligase RGLG5.